We begin with the raw amino-acid sequence, 281 residues long: 1-acyl-sn-glycerol-3-phosphate acyltransferase (281 aa).

3 helical membrane passes run 40–60 (IFVC…IMVL), 71–91 (LGNL…GIPI), and 110–130 (ASPI…VGVA). The HXXXXD motif motif lies at 109-114 (HASPID).

The protein belongs to the 1-acyl-sn-glycerol-3-phosphate acyltransferase family.

The protein resides in the membrane. The catalysed reaction is a 1-acyl-sn-glycero-3-phosphate + an acyl-CoA = a 1,2-diacyl-sn-glycero-3-phosphate + CoA. Its pathway is phospholipid metabolism; CDP-diacylglycerol biosynthesis; CDP-diacylglycerol from sn-glycerol 3-phosphate: step 2/3. Its function is as follows. Converts lysophosphatidic acid (LPA) into phosphatidic acid by incorporating acyl moiety at the 2 position. This enzyme uses erucoyl-CoA as an acyl donor. This chain is 1-acyl-sn-glycerol-3-phosphate acyltransferase, found in Limnanthes alba (White meadowfoam).